A 398-amino-acid chain; its full sequence is Acetate kinase (398 aa).

N8 provides a ligand contact to Mg(2+). K15 provides a ligand contact to ATP. R89 serves as a coordination point for substrate. D146 serves as the catalytic Proton donor/acceptor. ATP is bound by residues 206 to 210 (HIGNG), 281 to 283 (DLR), and 329 to 333 (GVGEN). E383 serves as a coordination point for Mg(2+).

Belongs to the acetokinase family. Homodimer. Mg(2+) is required as a cofactor. Requires Mn(2+) as cofactor.

Its subcellular location is the cytoplasm. The catalysed reaction is acetate + ATP = acetyl phosphate + ADP. It functions in the pathway metabolic intermediate biosynthesis; acetyl-CoA biosynthesis; acetyl-CoA from acetate: step 1/2. Functionally, catalyzes the formation of acetyl phosphate from acetate and ATP. Can also catalyze the reverse reaction. In Macrococcus caseolyticus (strain JCSC5402) (Macrococcoides caseolyticum), this protein is Acetate kinase.